A 546-amino-acid chain; its full sequence is Chromosomal replication initiator protein DnaA (546 aa).

The tract at residues 1 to 85 (MSDPQAALRA…TRALSQHMGR (85 aa)) is domain I, interacts with DnaA modulators. Residues 85–204 (RPCSLAVTIA…EPAHNPNREK (120 aa)) are domain II. Over residues 96-111 (PPQPAPQEEPPAPAPQ) the composition is skewed to pro residues. The tract at residues 96–209 (PPQPAPQEEP…PNREKSLNPK (114 aa)) is disordered. Residues 126 to 145 (QTQAFQQPTQSTQPAPASQP) show a composition bias toward low complexity. The span at 191–209 (IPREEPAHNPNREKSLNPK) shows a compositional bias: basic and acidic residues. Positions 205-421 (SLNPKHTFEN…GALIRVSAYS (217 aa)) are domain III, AAA+ region. Residues glycine 249, glycine 251, lysine 252, and threonine 253 each contribute to the ATP site. The domain IV, binds dsDNA stretch occupies residues 422-546 (SLVNEPISLE…TQRVKNHNQR (125 aa)).

This sequence belongs to the DnaA family. Oligomerizes as a right-handed, spiral filament on DNA at oriC.

It localises to the cytoplasm. Plays an essential role in the initiation and regulation of chromosomal replication. ATP-DnaA binds to the origin of replication (oriC) to initiate formation of the DNA replication initiation complex once per cell cycle. Binds the DnaA box (a 9 base pair repeat at the origin) and separates the double-stranded (ds)DNA. Forms a right-handed helical filament on oriC DNA; dsDNA binds to the exterior of the filament while single-stranded (ss)DNA is stabiized in the filament's interior. The ATP-DnaA-oriC complex binds and stabilizes one strand of the AT-rich DNA unwinding element (DUE), permitting loading of DNA polymerase. After initiation quickly degrades to an ADP-DnaA complex that is not apt for DNA replication. Binds acidic phospholipids. The sequence is that of Chromosomal replication initiator protein DnaA from Corynebacterium aurimucosum (strain ATCC 700975 / DSM 44827 / CIP 107346 / CN-1) (Corynebacterium nigricans).